The primary structure comprises 394 residues: Elongation factor Tu 2 (394 aa).

Residues 10–204 enclose the tr-type G domain; that stretch reads KPHVNVGTIG…YLDSYIPEPE (195 aa). Residues 19 to 26 are G1; it reads GHVDHGKT. A GTP-binding site is contributed by 19 to 26; it reads GHVDHGKT. Mg(2+) is bound at residue Thr26. The interval 60–64 is G2; sequence GITIN. The segment at 81 to 84 is G3; the sequence is DCPG. GTP contacts are provided by residues 81 to 85 and 136 to 139; these read DCPGH and NKCD. Positions 136 to 139 are G4; the sequence is NKCD. The interval 174 to 176 is G5; it reads SAL.

This sequence belongs to the TRAFAC class translation factor GTPase superfamily. Classic translation factor GTPase family. EF-Tu/EF-1A subfamily. As to quaternary structure, monomer.

Its subcellular location is the cytoplasm. It catalyses the reaction GTP + H2O = GDP + phosphate + H(+). In terms of biological role, GTP hydrolase that promotes the GTP-dependent binding of aminoacyl-tRNA to the A-site of ribosomes during protein biosynthesis. This Yersinia pseudotuberculosis serotype O:1b (strain IP 31758) protein is Elongation factor Tu 2.